Consider the following 102-residue polypeptide: Small ribosomal subunit protein uS10 (102 aa).

It belongs to the universal ribosomal protein uS10 family. In terms of assembly, part of the 30S ribosomal subunit.

In terms of biological role, involved in the binding of tRNA to the ribosomes. The chain is Small ribosomal subunit protein uS10 from Methanoregula boonei (strain DSM 21154 / JCM 14090 / 6A8).